The sequence spans 709 residues: Polyribonucleotide nucleotidyltransferase (709 aa).

Residues D490 and D496 each coordinate Mg(2+). The KH domain maps to 557 to 616 (PKVITMRVLPEKIPVIIGPSGKNIKKIIDETGVKIDLDQEGLVRIYAVDGESADKAKEMI). One can recognise an S1 motif domain in the interval 626–694 (GEVYMGKVTR…EMGRAKVSLK (69 aa)).

This sequence belongs to the polyribonucleotide nucleotidyltransferase family. Requires Mg(2+) as cofactor.

The protein resides in the cytoplasm. The catalysed reaction is RNA(n+1) + phosphate = RNA(n) + a ribonucleoside 5'-diphosphate. Its function is as follows. Involved in mRNA degradation. Catalyzes the phosphorolysis of single-stranded polyribonucleotides processively in the 3'- to 5'-direction. This chain is Polyribonucleotide nucleotidyltransferase, found in Persephonella marina (strain DSM 14350 / EX-H1).